The primary structure comprises 338 residues: Phenylalanine--tRNA ligase alpha subunit (338 aa).

Glutamate 253 is a binding site for Mg(2+).

This sequence belongs to the class-II aminoacyl-tRNA synthetase family. Phe-tRNA synthetase alpha subunit type 1 subfamily. Tetramer of two alpha and two beta subunits. Mg(2+) serves as cofactor.

Its subcellular location is the cytoplasm. It catalyses the reaction tRNA(Phe) + L-phenylalanine + ATP = L-phenylalanyl-tRNA(Phe) + AMP + diphosphate + H(+). The protein is Phenylalanine--tRNA ligase alpha subunit of Legionella pneumophila (strain Lens).